We begin with the raw amino-acid sequence, 495 residues long: Trimethylamine methyltransferase MttB2 (495 aa).

A non-standard amino acid (pyrrolysine) is located at residue Pyl334.

This sequence belongs to the trimethylamine methyltransferase family. Can form a complex with MttC.

It carries out the reaction Co(I)-[trimethylamine-specific corrinoid protein] + trimethylamine + H(+) = methyl-Co(III)-[trimethylamine-specific corrinoid protein] + dimethylamine. It functions in the pathway one-carbon metabolism; methanogenesis from trimethylamine. Catalyzes the transfer of a methyl group from trimethylamine to the corrinoid cofactor of MttC. This Methanosarcina mazei (strain ATCC BAA-159 / DSM 3647 / Goe1 / Go1 / JCM 11833 / OCM 88) (Methanosarcina frisia) protein is Trimethylamine methyltransferase MttB2 (mttB2).